Reading from the N-terminus, the 71-residue chain is Small ribosomal subunit protein bS18 (71 aa).

Belongs to the bacterial ribosomal protein bS18 family. As to quaternary structure, part of the 30S ribosomal subunit. Forms a tight heterodimer with protein bS6.

In terms of biological role, binds as a heterodimer with protein bS6 to the central domain of the 16S rRNA, where it helps stabilize the platform of the 30S subunit. The chain is Small ribosomal subunit protein bS18 from Nostoc punctiforme (strain ATCC 29133 / PCC 73102).